The following is a 622-amino-acid chain: Cilia- and flagella-associated protein 206 (622 aa).

Positions 571 to 592 (QVYPPKDTSTQSMREDSTGVPR) are disordered.

It belongs to the CFAP206 family.

Its subcellular location is the cytoplasm. The protein resides in the cytoskeleton. It is found in the cilium axoneme. It localises to the cilium basal body. In terms of biological role, essential for sperm motility and is involved in the regulation of the beating frequency of motile cilia on the epithelial cells of the respiratory tract. Required for the establishment of radial spokes in sperm flagella. This is Cilia- and flagella-associated protein 206 from Macaca fascicularis (Crab-eating macaque).